Consider the following 314-residue polypeptide: Acetaldehyde dehydrogenase 2 (314 aa).

15–18 (SGNI) is an NAD(+) binding site. Catalysis depends on cysteine 133, which acts as the Acyl-thioester intermediate. NAD(+) is bound by residues 164-172 (SAGPGTRAN) and asparagine 291.

Belongs to the acetaldehyde dehydrogenase family.

It catalyses the reaction acetaldehyde + NAD(+) + CoA = acetyl-CoA + NADH + H(+). This chain is Acetaldehyde dehydrogenase 2, found in Pseudomonas putida (strain ATCC 700007 / DSM 6899 / JCM 31910 / BCRC 17059 / LMG 24140 / F1).